The chain runs to 495 residues: Divinyl ether synthase CYP74M3 (495 aa).

Cys446 provides a ligand contact to heme.

The protein belongs to the cytochrome P450 family. It depends on heme as a cofactor.

The enzyme catalyses (13S)-hydroperoxy-(9Z,11E)-octadecadienoate = etheroleate + H2O. It carries out the reaction (13S)-hydroperoxy-(9Z,11E,15Z)-octadecatrienoate = etherolenate + H2O. The protein operates within lipid metabolism; oxylipin biosynthesis. In terms of biological role, divinyl ether synthase involved in oxylipin biosynthesis. Catalyzes the conversion of (13S)-hydroperoxy-(9Z,11E)-octadecadienoate (13-HPOD) to etheroleate and (13S)-hydroperoxy-(9Z,11E,15Z)-octadecatrienoate (13-HPOT) to etherolenate. Has no activity with the corresponding 9-hydroperoxides (9-HPOD and 9-HPOT). This chain is Divinyl ether synthase CYP74M3, found in Selaginella moellendorffii (Spikemoss).